The following is a 322-amino-acid chain: Peroxidase 66 (322 aa).

Residues 1-24 (MAFSKGLIFAMIFAVLAIVKPSEA) form the signal peptide. Cystine bridges form between C35–C114 and C68–C73. H66 acts as the Proton acceptor in catalysis. Ca(2+)-binding residues include D67, G72, D74, and S76. An N-linked (GlcNAc...) asparagine glycan is attached at N155. P161 is a binding site for substrate. A glycan (N-linked (GlcNAc...) asparagine) is linked at N166. H191 serves as a coordination point for heme b. Residue T192 participates in Ca(2+) binding. Residues C198 and C230 are joined by a disulfide bond. An N-linked (GlcNAc...) asparagine glycan is attached at N207. Ca(2+)-binding residues include D245, T247, and D252.

It belongs to the peroxidase family. Classical plant (class III) peroxidase subfamily. Requires heme b as cofactor. Ca(2+) serves as cofactor.

The protein localises to the secreted. It carries out the reaction 2 a phenolic donor + H2O2 = 2 a phenolic radical donor + 2 H2O. Removal of H(2)O(2), oxidation of toxic reductants, biosynthesis and degradation of lignin, suberization, auxin catabolism, response to environmental stresses such as wounding, pathogen attack and oxidative stress. These functions might be dependent on each isozyme/isoform in each plant tissue. The protein is Peroxidase 66 (PER66) of Arabidopsis thaliana (Mouse-ear cress).